Here is a 145-residue protein sequence, read N- to C-terminus: Allergen Sin a 1 (145 aa).

Positions 34–62 (SGSGPSWTLDDEFDFEDDMENPQGPQQRP) are disordered. The propeptide occupies 40–54 (WTLDDEFDFEDDMEN). Residues 42-53 (LDDEFDFEDDME) show a composition bias toward acidic residues.

It belongs to the 2S seed storage albumins family. In terms of assembly, the protein consists of two chains linked by disulfide bonds.

In terms of biological role, this is a 2S seed storage protein. The sequence is that of Allergen Sin a 1 from Sinapis alba (White mustard).